A 368-amino-acid polypeptide reads, in one-letter code: G-protein coupled receptor 62 (368 aa).

Residues 1–18 lie on the Extracellular side of the membrane; it reads MANSTGLNASEVAGSLGL. N-linked (GlcNAc...) asparagine glycosylation is found at asparagine 3 and asparagine 8. A helical transmembrane segment spans residues 19–39; it reads ILAAVVEVGALLGNGALLVVV. The Cytoplasmic segment spans residues 40-53; the sequence is LRTPGLRDALYLAH. Residues 54–74 traverse the membrane as a helical segment; that stretch reads LCVVDLLAAASIMPLGLLAAP. Residues 75–91 are Extracellular-facing; it reads PPGLGRVRLGPAPCRAA. A helical transmembrane segment spans residues 92-112; that stretch reads RFLSAALLPACTLGVAALGLA. Topologically, residues 113-129 are cytoplasmic; sequence RYRLIVHPLRPGSRPPP. Residues 130-150 form a helical membrane-spanning segment; that stretch reads VLVLTAVWAAAGLLGALSLLG. Residues 151 to 177 lie on the Extracellular side of the membrane; that stretch reads TPPAPPPAPARCSVLAGGLGPFRPLWA. Residues 178–198 form a helical membrane-spanning segment; it reads LLAFALPALLLLGAYGGIFVV. The Cytoplasmic segment spans residues 199-239; that stretch reads ARRAALRPPRPARGSRLHSDSLDSRLSILPPLRPRLPGGKA. Residues 240 to 260 form a helical membrane-spanning segment; it reads ALAPALAVGQFAACWLPYGCA. Residues 261–272 are Extracellular-facing; the sequence is CLAPAARAAEAE. Residues 273–293 form a helical membrane-spanning segment; the sequence is AAVTWVAYSAFAAHPFLYGLL. At 294-368 the chain is on the cytoplasmic side; sequence QRPVRLALGR…YQGPPESSLS (75 aa). The disordered stretch occupies residues 332 to 368; the sequence is RPPEGPAVGPSEAPEQTPELAGGRSPAYQGPPESSLS.

It belongs to the G-protein coupled receptor 1 family. As to quaternary structure, homodimers. Forms heterodimer with MTNR1B. Interacts with ARRB1 and ARRB2 in a spontaneous and agonist-independent manner; leading to the internalization of GPR62 in the endosomal compartment. Expressed in brain; detected in the basal forebrain, frontal cortex, caudate, putamen, thalamus and hippocampus.

Its subcellular location is the cell membrane. It localises to the endosome membrane. In terms of biological role, orphan G-protein coupled receptor. Constitutively activates the G(q/11)/inositol phosphate and the G(s)-alpha/cAMP signaling pathways. Has spontaneous activity for beta-arrestin recruitment. Shows a reciprocal modulation of signaling functions with the melatonin receptor MTNR1B most likely through receptor heteromerization. This is G-protein coupled receptor 62 (GPR62) from Homo sapiens (Human).